Consider the following 83-residue polypeptide: Mu-theraphotoxin-Hhn2j 2 (83 aa).

A signal peptide spans 1 to 21 (MKASMFLALAGLVLLFVVGYA). The propeptide occupies 22–48 (SESEEKEFPIELLSKIFAVDVFKGEDR). 3 cysteine pairs are disulfide-bonded: C50/C65, C57/C70, and C64/C77. The residue at position 81 (L81) is a Leucine amide.

The protein belongs to the neurotoxin 10 (Hwtx-1) family. 15 (Hntx-3) subfamily. In terms of assembly, monomer. Expressed by the venom gland.

The protein resides in the secreted. In terms of biological role, lethal neurotoxin. Selectively blocks tetrodotoxin-sensitive voltage-gated sodium channels (Nav). Does not affect tetrodotoxin-resistant voltage-gated sodium channels or calcium channels. The chain is Mu-theraphotoxin-Hhn2j 2 from Cyriopagopus hainanus (Chinese bird spider).